A 244-amino-acid polypeptide reads, in one-letter code: Small ribosomal subunit protein uS2m (244 aa).

The protein belongs to the universal ribosomal protein uS2 family.

It is found in the mitochondrion. The chain is Small ribosomal subunit protein uS2m (mrps2) from Dictyostelium discoideum (Social amoeba).